The primary structure comprises 273 residues: MSTSVTLNLHLISDSTCETVASVARSALEHFRSVEVNEFVWSFINNNEQIDKIMSLIEKDKYNFIMYTMFDDELRRYLKQKAGAQEIPCIPVLSHVIREISCYLHIKKDPYISTNIGLDDEYFTRIDAINYTIAHDDGQNLWDIDQADIIILGVSRTSKSPTSIYLAYRGYRVVNIPLVHSINLSVDLSNMKNKLIVGLTIDIDRLIEIRRTRLVSMKNQNNYQYVDYEHVLMEIKETKRICVQNGWPIIDVTQKSVEEIAATIIQYFNKMQH.

An ADP-binding site is contributed by 153–160 (GVSRTSKS).

This sequence belongs to the pyruvate, phosphate/water dikinase regulatory protein family. PDRP subfamily.

The enzyme catalyses N(tele)-phospho-L-histidyl/L-threonyl-[pyruvate, phosphate dikinase] + ADP = N(tele)-phospho-L-histidyl/O-phospho-L-threonyl-[pyruvate, phosphate dikinase] + AMP + H(+). It carries out the reaction N(tele)-phospho-L-histidyl/O-phospho-L-threonyl-[pyruvate, phosphate dikinase] + phosphate + H(+) = N(tele)-phospho-L-histidyl/L-threonyl-[pyruvate, phosphate dikinase] + diphosphate. In terms of biological role, bifunctional serine/threonine kinase and phosphorylase involved in the regulation of the pyruvate, phosphate dikinase (PPDK) by catalyzing its phosphorylation/dephosphorylation. The sequence is that of Putative pyruvate, phosphate dikinase regulatory protein from Ehrlichia chaffeensis (strain ATCC CRL-10679 / Arkansas).